The sequence spans 169 residues: Ion-translocating oxidoreductase complex subunit B (169 aa).

The segment at Met-1–Ser-23 is hydrophobic. The 4Fe-4S domain occupies Ser-30 to Lys-89. [4Fe-4S] cluster-binding residues include Cys-47, Cys-50, Cys-55, Cys-72, Cys-116, Cys-119, Cys-122, Cys-126, Cys-146, Cys-149, Cys-152, and Cys-156. 4Fe-4S ferredoxin-type domains are found at residues Ser-107–Asn-136 and Phe-137–Met-166.

It belongs to the 4Fe4S bacterial-type ferredoxin family. RnfB subfamily. The complex is composed of six subunits: RnfA, RnfB, RnfC, RnfD, RnfE and RnfG. It depends on [4Fe-4S] cluster as a cofactor.

Its subcellular location is the cell inner membrane. In terms of biological role, part of a membrane-bound complex that couples electron transfer with translocation of ions across the membrane. The polypeptide is Ion-translocating oxidoreductase complex subunit B (Buchnera aphidicola subsp. Baizongia pistaciae (strain Bp)).